We begin with the raw amino-acid sequence, 154 residues long: Interleukin-7 (154 aa).

The signal sequence occupies residues 1–25 (MFHVSFRYIFGIPPLILVLLPVTSS). Cystine bridges form between Cys27–Cys145, Cys58–Cys133, and Cys71–Cys116. 2 N-linked (GlcNAc...) asparagine glycosylation sites follow: Asn94 and Asn115.

This sequence belongs to the IL-7/IL-9 family. As to quaternary structure, interacts with IL7R and CSF2RG. In terms of processing, three disulfide bonds are present.

The protein resides in the secreted. In terms of biological role, hematopoietic cytokine that plays an essential role in the development, expansion, and survival of naive and memory T-cells and B-cells thereby regulating the number of mature lymphocytes and maintaining lymphoid homeostasis. Mechanistically, exerts its biological effects through a receptor composed of IL7RA subunit and the cytokine receptor common subunit gamma/CSF2RG. Binding to the receptor leads to activation of various kinases including JAK1 or JAK3 depending on the cell type and subsequently propagation of signals through activation of several downstream signaling pathways including the PI3K/Akt/mTOR or the JAK-STAT5. The polypeptide is Interleukin-7 (Il7) (Rattus norvegicus (Rat)).